Reading from the N-terminus, the 200-residue chain is NAD(P)H dehydrogenase (quinone) (200 aa).

A Flavodoxin-like domain is found at 4–190; that stretch reads VLVLYYSTYG…DGARFQGRLV (187 aa). Residues 10–15 and 78–80 contribute to the FMN site; these read STYGHL and TRF. Position 12 (Y12) interacts with NAD(+). W98 provides a ligand contact to substrate. FMN-binding positions include 113–119 and H134; that span reads STATQHG.

This sequence belongs to the WrbA family. FMN is required as a cofactor.

It catalyses the reaction a quinone + NADH + H(+) = a quinol + NAD(+). The enzyme catalyses a quinone + NADPH + H(+) = a quinol + NADP(+). In Acidovorax ebreus (strain TPSY) (Diaphorobacter sp. (strain TPSY)), this protein is NAD(P)H dehydrogenase (quinone).